The sequence spans 624 residues: (-)-beta-phellandrene synthase 4, chloroplastic (624 aa).

A chloroplast-targeting transit peptide spans 1 to 48 (MAIVSSVPLASKSCLHKSLISSIHKLKPFCRTIPTLGMSRPGKSVMPS). A disordered region spans residues 41 to 60 (PGKSVMPSMSMSSPVSDDGV). A compositionally biased stretch (low complexity) spans 44 to 56 (SVMPSMSMSSPVS). Mg(2+) is bound by residues Asp375, Asp379, and Asp527. The short motif at 375–379 (DDMYD) is the DDXXD motif element.

Belongs to the terpene synthase family. Tpsd subfamily. Requires Mg(2+) as cofactor. The cofactor is Mn(2+).

It is found in the plastid. Its subcellular location is the chloroplast. The catalysed reaction is (2E)-geranyl diphosphate = (-)-beta-phellandrene + diphosphate. It participates in terpene metabolism; oleoresin biosynthesis. Terpene synthase (TPS) involved in the biosynthesis of monoterpene natural products included in conifer oleoresin secretions and volatile emissions; these compounds contribute to biotic and abiotic stress defense against herbivores and pathogens. Catalyzes the conversion of (2E)-geranyl diphosphate (GPP) to (-)-beta-phellandrene. The chain is (-)-beta-phellandrene synthase 4, chloroplastic from Picea sitchensis (Sitka spruce).